The sequence spans 117 residues: PBP1-interacting protein XAC1 (117 aa).

A disordered region spans residues 1–60 (MSKAPSQPAKKWMSARTLAKSEDATNRKSNTAAPASQPSQQPASVMHERPTPPPPAPVQL). A compositionally biased stretch (low complexity) spans 32-44 (AAPASQPSQQPAS).

Forms a complex composed of at least MKT1, PBP1, XAC1 and LSM12. Forms a complex composed of at least MKT1L, PBP1, XAC1 and LSM12.

The protein resides in the cytoplasm. Its function is as follows. Involved in post-transcriptional regulation of gene expression. The chain is PBP1-interacting protein XAC1 from Trypanosoma brucei brucei (strain 927/4 GUTat10.1).